Consider the following 298-residue polypeptide: Short-chain dehydrogenase/reductase prx6 (298 aa).

NADP(+)-binding residues include I27, D70, N97, Y174, K178, V208, and T210. Y174 acts as the Proton acceptor in catalysis. K178 functions as the Lowers pKa of active site Tyr in the catalytic mechanism.

This sequence belongs to the short-chain dehydrogenases/reductases (SDR) family.

Its pathway is sesquiterpene biosynthesis. Its function is as follows. Short-chain dehydrogenase/reductase; part of the gene cluster that mediates the biosynthesis of PR-toxin, a bicyclic sesquiterpene belonging to the eremophilane class and acting as a mycotoxin. The first step of the pathway is catalyzed by the aristolochene synthase which performs the cyclization of trans,trans-farnesyl diphosphate (FPP) to the bicyclic sesquiterpene aristolochene. Following the formation of aristolochene, the non-oxygenated aristolochene is converted to the trioxygenated intermediate eremofortin B, via 7-epi-neopetasone. This conversion appears to involve three enzymes, a hydroxysterol oxidase-like enzyme, the quinone-oxidase prx3 that forms the quinone-type-structure in the bicyclic nucleus of aristolochene with the C8-oxo group and the C-3 hydroxyl group, and the P450 monooxygenase prx9 that introduces the epoxide at the double bond between carbons 1 and 2. No monoxy or dioxy-intermediates have been reported to be released to the broth, so these three early oxidative reactions may be coupled together. Eremofortin B is further oxidized by another P450 monooxygenase, that introduces a second epoxide between carbons 7 and 11 prior to acetylation to eremofortin A by the acetyltransferase prx11. The second epoxidation may be performed by a second P450 monooxygenase. After the acetylation step, eremofortin A is converted to eremofortin C and then to PR-toxin. First the conversion of eremofortin A to eremofortin C proceeds by oxidation of the side chain of the molecule at C-12 and is catalyzed by the short-chain oxidoreductase prx1. The cytochrome P450 monooxygenase prx8 also plays a role in this step. The primary alcohol formed at C-12 is finally oxidized by the short-chain alcohol dehydrogenase prx4 that forms PR-toxin. The sequence is that of Short-chain dehydrogenase/reductase prx6 from Penicillium rubens (strain ATCC 28089 / DSM 1075 / NRRL 1951 / Wisconsin 54-1255) (Penicillium chrysogenum).